Consider the following 474-residue polypeptide: BPI fold-containing family B member 1 (474 aa).

A signal peptide spans 1 to 21 (MAGPWIITLLCGLLGATLVQA). Asn153, Asn160, Asn263, and Asn400 each carry an N-linked (GlcNAc...) asparagine glycan. A disulfide bridge connects residues Cys157 and Cys200.

This sequence belongs to the BPI/LBP/Plunc superfamily. Plunc family. As to expression, expressed in tongue, lung, thymus, and stomach. Expressed in epithelia of palate, anterior pharynx, trachea and upper bronchi. Expressed in distal tip of papillae in the anterior third of the tongue and in serous cells of von Ebner glands in the posterior third of the tongue. Expressed in columnar epithelium of the duodenum in embryonic gut at 16.5 dpc.

It localises to the secreted. May play a role in innate immunity in mouth, nose and lungs. Binds bacterial lipopolysaccharide (LPS) and modulates the cellular responses to LPS. May be involved in formation of the left-right axis in the node of the developing embryo. The chain is BPI fold-containing family B member 1 (Bpifb1) from Mus musculus (Mouse).